The sequence spans 364 residues: MQERHTEQDYRALLIADTPIIDVRAPIEFEQGAMPAAINLPLMNNDERAAVGTCYKQQGSDAALALGHKLVAGEIRQQRMDAWRAACLQNPQGILCCARGGQRSHIVQRWLHEAGIDYPLVDGGYKALRQTAIQATIELSQKPIVLIGGCTGSGKTLLVQQQPNGVDLEGLARHRGSAFGRTLQPQLSQASFENLLAAEMLKTDARQELRLWVLEDESRMIGSNHLPECLRERMTQAAIAVVEDPFEIRLERLNEEYFLRMHHDFTHAYGDEQGWQEYCEYLHHGLSAIKRRLGLQRYNELAAQLDTALTTQLTTGSTDGHLAWLVPLLEEYYDPMYRYQLEKKAEKVVFRGEWAEVAEWVKAQ.

Residues 14-137 form the Rhodanese domain; that stretch reads LIADTPIIDV…LRQTAIQATI (124 aa). Cysteine 97 acts as the S-selanylcysteine intermediate in catalysis.

Belongs to the SelU family. As to quaternary structure, monomer.

The enzyme catalyses 5-methylaminomethyl-2-thiouridine(34) in tRNA + selenophosphate + (2E)-geranyl diphosphate + H2O + H(+) = 5-methylaminomethyl-2-selenouridine(34) in tRNA + (2E)-thiogeraniol + phosphate + diphosphate. It carries out the reaction 5-methylaminomethyl-2-thiouridine(34) in tRNA + (2E)-geranyl diphosphate = 5-methylaminomethyl-S-(2E)-geranyl-thiouridine(34) in tRNA + diphosphate. It catalyses the reaction 5-methylaminomethyl-S-(2E)-geranyl-thiouridine(34) in tRNA + selenophosphate + H(+) = 5-methylaminomethyl-2-(Se-phospho)selenouridine(34) in tRNA + (2E)-thiogeraniol. The catalysed reaction is 5-methylaminomethyl-2-(Se-phospho)selenouridine(34) in tRNA + H2O = 5-methylaminomethyl-2-selenouridine(34) in tRNA + phosphate. Its function is as follows. Involved in the post-transcriptional modification of the uridine at the wobble position (U34) of tRNA(Lys), tRNA(Glu) and tRNA(Gln). Catalyzes the conversion of 2-thiouridine (S2U-RNA) to 2-selenouridine (Se2U-RNA). Acts in a two-step process involving geranylation of 2-thiouridine (S2U) to S-geranyl-2-thiouridine (geS2U) and subsequent selenation of the latter derivative to 2-selenouridine (Se2U) in the tRNA chain. In Escherichia coli O17:K52:H18 (strain UMN026 / ExPEC), this protein is tRNA 2-selenouridine synthase.